A 275-amino-acid chain; its full sequence is Dermonecrotic toxin SpaSicTox-betaIIA2 (275 aa).

His5 is an active-site residue. 2 residues coordinate Mg(2+): Glu25 and Asp27. The active-site Nucleophile is His41. Disulfide bonds link Cys45/Cys51 and Cys47/Cys190. Mg(2+) is bound at residue Asp85.

The protein belongs to the arthropod phospholipase D family. Class II subfamily. Requires Mg(2+) as cofactor. As to expression, expressed by the venom gland.

It localises to the secreted. The enzyme catalyses an N-(acyl)-sphingosylphosphocholine = an N-(acyl)-sphingosyl-1,3-cyclic phosphate + choline. The catalysed reaction is an N-(acyl)-sphingosylphosphoethanolamine = an N-(acyl)-sphingosyl-1,3-cyclic phosphate + ethanolamine. It catalyses the reaction a 1-acyl-sn-glycero-3-phosphocholine = a 1-acyl-sn-glycero-2,3-cyclic phosphate + choline. It carries out the reaction a 1-acyl-sn-glycero-3-phosphoethanolamine = a 1-acyl-sn-glycero-2,3-cyclic phosphate + ethanolamine. Dermonecrotic toxins cleave the phosphodiester linkage between the phosphate and headgroup of certain phospholipids (sphingolipid and lysolipid substrates), forming an alcohol (often choline) and a cyclic phosphate. This toxin acts on sphingomyelin (SM). It may also act on ceramide phosphoethanolamine (CPE), lysophosphatidylcholine (LPC) and lysophosphatidylethanolamine (LPE), but not on lysophosphatidylserine (LPS), and lysophosphatidylglycerol (LPG). It acts by transphosphatidylation, releasing exclusively cyclic phosphate products as second products. Induces dermonecrosis, hemolysis, increased vascular permeability, edema, inflammatory response, and platelet aggregation. The polypeptide is Dermonecrotic toxin SpaSicTox-betaIIA2 (Sicarius patagonicus (Six-eyed sand spider)).